Consider the following 216-residue polypeptide: Large ribosomal subunit protein uL3 (216 aa).

Q153 carries the N5-methylglutamine modification.

This sequence belongs to the universal ribosomal protein uL3 family. As to quaternary structure, part of the 50S ribosomal subunit. Forms a cluster with proteins L14 and L19. Methylated by PrmB.

In terms of biological role, one of the primary rRNA binding proteins, it binds directly near the 3'-end of the 23S rRNA, where it nucleates assembly of the 50S subunit. The polypeptide is Large ribosomal subunit protein uL3 (Burkholderia multivorans (strain ATCC 17616 / 249)).